A 297-amino-acid polypeptide reads, in one-letter code: Endonuclease G, mitochondrial (297 aa).

A mitochondrion-targeting transit peptide spans 1 to 48 (MRALRAGLTLASGAGLGAVVEGWRRRREDARAAPGLLGRLPVLPVAAA). At Thr128 the chain carries Phosphothreonine; by GSK3-beta. The active-site Proton acceptor is His141. Asn172 provides a ligand contact to Mg(2+). The tract at residues 286–296 (AGSLKAITAGS) is essential for deoxyribonuclease activity. Ser288 is modified (phosphoserine; by GSK3-beta).

It belongs to the DNA/RNA non-specific endonuclease family. Homodimer; disulfide-linked. Homodimerization is essential for enzyme activity. Interacts with YWHAG. It depends on Mg(2+) as a cofactor. In terms of processing, GSK3-beta-mediated dual phosphorylations at Thr-128 and Ser-288 is necessary for its interaction with YWHAG and the induction of autophagy.

It is found in the mitochondrion. Endonuclease that preferentially catalyzes the cleavage of double-stranded 5-hydroxymethylcytosine (5hmC)-modified DNA. The 5hmC-modified nucleotide does not increase the binding affinity, but instead increases the efficiency of cutting and specifies the site of cleavage for the modified DNAs. Shows significantly higher affinity for four-stranded Holliday junction over duplex and single-stranded DNAs. Promotes conservative recombination when the DNA is 5hmC-modified. Promotes autophagy through the suppression of mTOR by its phosphorylation-mediated interaction with YWHAG and its endonuclease activity-mediated DNA damage response. GSK3-beta mediated phosphorylation of ENDOG enhances its interaction with YWHAG, leading to the release of TSC2 and PIK3C3 from YWHAG resulting in mTOR pathway suppression and autophagy initiation. Promotes cleavage of mtDNA in response to oxidative and nitrosative stress, in turn inducing compensatory mtDNA replication. The chain is Endonuclease G, mitochondrial (ENDOG) from Homo sapiens (Human).